Consider the following 96-residue polypeptide: uncharacterized protein (96 aa).

N4 carries an N-linked (GlcNAc...) asparagine glycan. The helical transmembrane segment at 59-81 threads the bilayer; it reads VFFTIFDTIITIIVRSGIPFPLL.

The protein localises to the membrane. This is an uncharacterized protein from Saccharomyces cerevisiae (strain ATCC 204508 / S288c) (Baker's yeast).